The chain runs to 403 residues: D-alanyl-D-alanine carboxypeptidase DacA (403 aa).

The first 29 residues, 1–29, serve as a signal peptide directing secretion; the sequence is MNTIFSARIMKRLALTTALCTAFISAAHA. Serine 73 acts as the Acyl-ester intermediate in catalysis. Lysine 76 serves as the catalytic Proton acceptor. Residue serine 139 is part of the active site. Lysine 242 provides a ligand contact to substrate.

It belongs to the peptidase S11 family.

It localises to the cell inner membrane. It carries out the reaction Preferential cleavage: (Ac)2-L-Lys-D-Ala-|-D-Ala. Also transpeptidation of peptidyl-alanyl moieties that are N-acyl substituents of D-alanine.. It functions in the pathway cell wall biogenesis; peptidoglycan biosynthesis. Functionally, removes C-terminal D-alanyl residues from sugar-peptide cell wall precursors. The chain is D-alanyl-D-alanine carboxypeptidase DacA (dacA) from Escherichia coli O157:H7.